We begin with the raw amino-acid sequence, 239 residues long: 1-(5-phosphoribosyl)-5-[(5-phosphoribosylamino)methylideneamino] imidazole-4-carboxamide isomerase (239 aa).

The Proton acceptor role is filled by Asp9. The Proton donor role is filled by Asp131.

This sequence belongs to the HisA/HisF family.

The protein resides in the cytoplasm. The enzyme catalyses 1-(5-phospho-beta-D-ribosyl)-5-[(5-phospho-beta-D-ribosylamino)methylideneamino]imidazole-4-carboxamide = 5-[(5-phospho-1-deoxy-D-ribulos-1-ylimino)methylamino]-1-(5-phospho-beta-D-ribosyl)imidazole-4-carboxamide. The protein operates within amino-acid biosynthesis; L-histidine biosynthesis; L-histidine from 5-phospho-alpha-D-ribose 1-diphosphate: step 4/9. The sequence is that of 1-(5-phosphoribosyl)-5-[(5-phosphoribosylamino)methylideneamino] imidazole-4-carboxamide isomerase from Parabacteroides distasonis (strain ATCC 8503 / DSM 20701 / CIP 104284 / JCM 5825 / NCTC 11152).